The primary structure comprises 392 residues: Formate-dependent phosphoribosylglycinamide formyltransferase (392 aa).

N(1)-(5-phospho-beta-D-ribosyl)glycinamide-binding positions include 22–23 (EL) and E82. ATP is bound by residues R114, K155, 160-165 (SSGKGQ), 195-198 (EGVV), and E203. The region spanning 119–308 (RLAAEELQLP…EFALHVRAFL (190 aa)) is the ATP-grasp domain. Residues E267 and E279 each coordinate Mg(2+). N(1)-(5-phospho-beta-D-ribosyl)glycinamide-binding positions include D286, K355, and 362–363 (RR).

This sequence belongs to the PurK/PurT family. Homodimer.

It catalyses the reaction N(1)-(5-phospho-beta-D-ribosyl)glycinamide + formate + ATP = N(2)-formyl-N(1)-(5-phospho-beta-D-ribosyl)glycinamide + ADP + phosphate + H(+). The protein operates within purine metabolism; IMP biosynthesis via de novo pathway; N(2)-formyl-N(1)-(5-phospho-D-ribosyl)glycinamide from N(1)-(5-phospho-D-ribosyl)glycinamide (formate route): step 1/1. Functionally, involved in the de novo purine biosynthesis. Catalyzes the transfer of formate to 5-phospho-ribosyl-glycinamide (GAR), producing 5-phospho-ribosyl-N-formylglycinamide (FGAR). Formate is provided by PurU via hydrolysis of 10-formyl-tetrahydrofolate. This is Formate-dependent phosphoribosylglycinamide formyltransferase from Escherichia coli O1:K1 / APEC.